Reading from the N-terminus, the 739-residue chain is Nuclear pore complex protein NUP62 (739 aa).

Tandem repeats lie at residues 6–7 (FG), 17–18 (FG), 50–51 (FG), 52–53 (FG), 68–69 (FG), 70–71 (FG), 78–79 (FG), 80–81 (FG), 91–92 (FG), 93–94 (FG), 108–109 (FG), 110–111 (FG), 124–125 (FG), 141–142 (FG), 159–160 (FG), 174–175 (FG), 186–187 (FG), 207–208 (FG), and 221–222 (FG). The 26 X 2 AA repeats of F-G stretch occupies residues 6–450 (FGQSNSVGGF…AATFSTTGFG (445 aa)). The segment at 18–67 (GSSSATNSSSASSTTSPLSFSFNQSSNPSSTGFGFGSSVSSTPASSTTPS) is disordered. Low complexity predominate over residues 79-218 (GFGSSASSST…ASSSAATSTS (140 aa)). The disordered stretch occupies residues 79-245 (GFGSSASSST…VASSAPGSSS (167 aa)). Over residues 232–245 (PSFSVASSAPGSSS) the composition is skewed to low complexity. 5 tandem repeats follow at residues 248–249 (FG), 271–272 (FG), 280–281 (FG), 308–309 (FG), and 366–367 (FG). Disordered stretches follow at residues 281–329 (GSSS…ASPF), 341–366 (TASS…SFSF), and 399–418 (TTTS…SAPA). Tandem repeats lie at residues 426–427 (FG) and 449–450 (FG). The interval 471-533 (KTSTPASSSQ…AVAPVAGSPK (63 aa)) is disordered. A compositionally biased stretch (low complexity) spans 472 to 519 (TSTPASSSQPQTTSPAFSFSLPSSTSTTAPATSSATTTQTTLVVPSSS). A coiled-coil region spans residues 584 to 674 (RLEIEVAKVV…IRSIIQSVNA (91 aa)).

This sequence belongs to the nucleoporin NSP1/NUP62 family. Part of the nuclear pore complex (NPC). The NPC has an eight-fold symmetrical structure comprising a central transport channel and two rings, the cytoplasmic and nuclear rings, to which eight filaments are attached. The cytoplasmic filaments have loose ends, while the nuclear filaments are joined in a distal ring, forming a nuclear basket. NPCs are highly dynamic in configuration and composition, and can be devided in 3 subcomplexes, the NUP62 subcomplex, the NUP107-160 subcomplex and the NUP93 subcomplex, containing approximately 30 different nucleoporin proteins. Interacts with NUP58 and the importin KPNB1.

The protein localises to the nucleus envelope. The protein resides in the nucleus. It localises to the nuclear pore complex. In Arabidopsis thaliana (Mouse-ear cress), this protein is Nuclear pore complex protein NUP62.